A 201-amino-acid polypeptide reads, in one-letter code: Large ribosomal subunit protein bL25 (201 aa).

The tract at residues 181-201 is disordered; the sequence is APRESEEEAEEEATETAKESE. A compositionally biased stretch (acidic residues) spans 185 to 194; sequence SEEEAEEEAT.

It belongs to the bacterial ribosomal protein bL25 family. CTC subfamily. Part of the 50S ribosomal subunit; part of the 5S rRNA/L5/L18/L25 subcomplex. Contacts the 5S rRNA. Binds to the 5S rRNA independently of L5 and L18.

In terms of biological role, this is one of the proteins that binds to the 5S RNA in the ribosome where it forms part of the central protuberance. The chain is Large ribosomal subunit protein bL25 from Thermoanaerobacter pseudethanolicus (strain ATCC 33223 / 39E) (Clostridium thermohydrosulfuricum).